Reading from the N-terminus, the 191-residue chain is Putative resolvase L103 (191 aa).

The segment at residues 11-30 is a DNA-binding region (H-T-H motif); it reads LEVLKVHYQTLYRMEEKGLI. In terms of domain architecture, Resolvase/invertase-type recombinase catalytic spans 59–191; the sequence is KGICYCRVSS…KKSGKLKAKK (133 aa). A coiled-coil region spans residues 65-91; the sequence is RVSSKKQIKDLNRQVEYMEKNYPEYEI. Ser-67 acts as the O-(5'-phospho-DNA)-serine intermediate in catalysis.

The protein belongs to the site-specific recombinase resolvase family.

Functionally, resolvase catalyzes the resolution (a site-specific recombination) of the cointegrated replicon to yield the final transposition products. The chain is Putative resolvase L103 from Acanthamoeba polyphaga (Amoeba).